Consider the following 59-residue polypeptide: Large ribosomal subunit protein uL30 (59 aa).

The protein belongs to the universal ribosomal protein uL30 family. As to quaternary structure, part of the 50S ribosomal subunit.

This is Large ribosomal subunit protein uL30 from Photorhabdus laumondii subsp. laumondii (strain DSM 15139 / CIP 105565 / TT01) (Photorhabdus luminescens subsp. laumondii).